A 376-amino-acid polypeptide reads, in one-letter code: O-demethylpuromycin-O-methyltransferase (376 aa).

The disordered stretch occupies residues 1–28; the sequence is MAPTEATRGGPADPAPAPEAHRGGHTEH. The segment covering 19 to 28 has biased composition (basic and acidic residues); the sequence is EAHRGGHTEH. S-adenosyl-L-methionine contacts are provided by residues aspartate 235 and 261 to 263; that span reads GDF. Histidine 281 acts as the Proton acceptor in catalysis.

This sequence belongs to the class I-like SAM-binding methyltransferase superfamily. Cation-independent O-methyltransferase family.

It carries out the reaction O-demethylpuromycin + S-adenosyl-L-methionine = puromycin + S-adenosyl-L-homocysteine + H(+). This chain is O-demethylpuromycin-O-methyltransferase (dmpM), found in Streptomyces alboniger.